Here is a 64-residue protein sequence, read N- to C-terminus: Large ribosomal subunit protein bL33 (64 aa).

Residues 16-25 are compositionally biased toward basic and acidic residues; sequence EARTSSEPRR. The tract at residues 16 to 39 is disordered; that stretch reads EARTSSEPRRSNGISRYTTEKNKR.

Belongs to the bacterial ribosomal protein bL33 family.

This Prochlorococcus marinus (strain MIT 9515) protein is Large ribosomal subunit protein bL33.